A 109-amino-acid polypeptide reads, in one-letter code: Protein ELF4-LIKE 3 (109 aa).

The disordered stretch occupies residues 88-109 (SMEASSEGDSSEGRGNRRIRPA).

It belongs to the EARLY FLOWERING 4 family. In terms of assembly, homodimer.

It localises to the nucleus. Component of the central CCA1/LHY-TOC1 feedback loop in the circadian clock that promotes clock accuracy and is required for sustained rhythms in the absence of daily light/dark cycles. In Arabidopsis thaliana (Mouse-ear cress), this protein is Protein ELF4-LIKE 3 (EFL3).